The sequence spans 116 residues: Large ribosomal subunit protein bL17 (116 aa).

The protein belongs to the bacterial ribosomal protein bL17 family. As to quaternary structure, part of the 50S ribosomal subunit. Contacts protein L32.

The sequence is that of Large ribosomal subunit protein bL17 from Chloroflexus aggregans (strain MD-66 / DSM 9485).